The chain runs to 279 residues: Four and a half LIM domains protein 2 (279 aa).

The C4-type zinc-finger motif lies at 7–31 (CHHCNESLYGKKYILKEENPHCVAC). LIM zinc-binding domains are found at residues 40–92 (CEEC…CTDC), 101–153 (CQEC…CVPC), and 162–212 (CVQC…CLTC). Residue K78 forms a Glycyl lysine isopeptide (Lys-Gly) (interchain with G-Cter in SUMO2) linkage. Glycyl lysine isopeptide (Lys-Gly) (interchain with G-Cter in SUMO2) cross-links involve residues K167 and K220. The 55-residue stretch at 221-275 (CAGCTNPISGLGGTKYISFEERQWHNDCFNCKKCSLSLVGRGFLTERDDILCPDC) folds into the LIM zinc-binding 4 domain. At S238 the chain carries Phosphoserine.

Interacts with ZNF638 and TTN/titin. Interacts with E4F1. Interacts with GRB7. Interacts with SIRT1 and FOXO1. Interacts with CEFIP and calcineurin. Interacts with FOXK1. As to expression, expressed in heart only (at protein level).

The protein resides in the cytoplasm. The protein localises to the nucleus. Its subcellular location is the myofibril. It localises to the sarcomere. It is found in the z line. May function as a molecular transmitter linking various signaling pathways to transcriptional regulation. Negatively regulates the transcriptional repressor E4F1 and may function in cell growth. Inhibits the transcriptional activity of FOXO1 and its apoptotic function by enhancing the interaction of FOXO1 with SIRT1 and FOXO1 deacetylation. Negatively regulates the calcineurin/NFAT signaling pathway in cardiomyocytes. The polypeptide is Four and a half LIM domains protein 2 (Fhl2) (Rattus norvegicus (Rat)).